Reading from the N-terminus, the 118-residue chain is MICOS complex subunit MIC13 (118 aa).

Residues 1–7 lie on the Mitochondrial matrix side of the membrane; sequence MVPRVWS. Residues 8–26 form a helical membrane-spanning segment; sequence LMRFLIKGSVAGGAIYLVY. Topologically, residues 27–118 are mitochondrial intermembrane; it reads DQDPLGPSDK…GWEYLKERTK (92 aa).

Belongs to the MICOS complex subunit Mic13 family. In terms of assembly, component of the mitochondrial contact site and cristae organizing system (MICOS) complex, composed of at least MICOS10/MIC10, CHCHD3/MIC19, CHCHD6/MIC25, APOO/MIC26, MICOS13/MIC13, APOOL/MIC27 and IMMT/MIC60. The MICOS complex associates with mitochondrial outer membrane proteins SAMM50, MTX1 and MTX2 (together described as components of the mitochondrial outer membrane sorting assembly machinery (SAM) complex) and DNAJC11, mitochondrial inner membrane protein TMEM11 and with HSPA9. The MICOS and SAM complexes together with DNAJC11 are part of a large protein complex spanning both membranes termed the mitochondrial intermembrane space bridging (MIB) complex.

It localises to the mitochondrion inner membrane. Functionally, component of the MICOS complex, a large protein complex of the mitochondrial inner membrane that plays crucial roles in the maintenance of crista junctions, inner membrane architecture, and formation of contact sites to the outer membrane. Constituent of mature MICOS complex, it is required for the formation of cristae junction (CJ) and maintenance of cristae morphology. Required for the incorporation of MICOS10/MIC10 into the MICOS complex. The protein is MICOS complex subunit MIC13 of Sus scrofa (Pig).